Here is a 157-residue protein sequence, read N- to C-terminus: Transcription elongation factor GreA (157 aa).

A coiled-coil region spans residues 47–75; sequence SGEYEDAKKAQALLEGRIRELKHLLSRAE.

Belongs to the GreA/GreB family.

In terms of biological role, necessary for efficient RNA polymerase transcription elongation past template-encoded arresting sites. The arresting sites in DNA have the property of trapping a certain fraction of elongating RNA polymerases that pass through, resulting in locked ternary complexes. Cleavage of the nascent transcript by cleavage factors such as GreA or GreB allows the resumption of elongation from the new 3'terminus. GreA releases sequences of 2 to 3 nucleotides. The sequence is that of Transcription elongation factor GreA from Chloroflexus aggregans (strain MD-66 / DSM 9485).